We begin with the raw amino-acid sequence, 745 residues long: 1,4-alpha-glucan branching enzyme GlgB (745 aa).

D416 functions as the Nucleophile in the catalytic mechanism. Residue E469 is the Proton donor of the active site.

Belongs to the glycosyl hydrolase 13 family. GlgB subfamily. In terms of assembly, monomer.

It carries out the reaction Transfers a segment of a (1-&gt;4)-alpha-D-glucan chain to a primary hydroxy group in a similar glucan chain.. Its pathway is glycan biosynthesis; glycogen biosynthesis. Its function is as follows. Catalyzes the formation of the alpha-1,6-glucosidic linkages in glycogen by scission of a 1,4-alpha-linked oligosaccharide from growing alpha-1,4-glucan chains and the subsequent attachment of the oligosaccharide to the alpha-1,6 position. The sequence is that of 1,4-alpha-glucan branching enzyme GlgB from Shewanella sp. (strain W3-18-1).